The chain runs to 452 residues: ADP-dependent glucose/glucosamine kinase (452 aa).

Residues 1-452 (MSWDEMYRDA…AFVSEFSLSS (452 aa)) enclose the ADPK domain. Residues D33, E87, 111-112 (GQ), and H174 each bind D-glucose. Position 264 (E264) interacts with Mg(2+). Residue N290 coordinates ADP. E293 is a Mg(2+) binding site. ADP-binding positions include 339–340 (HT), V426, and G436. Residue D437 coordinates D-glucose. D437 contributes to the Mg(2+) binding site. The Proton acceptor role is filled by D437.

Belongs to the ADP-dependent glucokinase family. The cofactor is Mg(2+).

It is found in the cytoplasm. The catalysed reaction is D-glucose + ADP = D-glucose 6-phosphate + AMP + H(+). It carries out the reaction D-glucosamine + ADP = D-glucosamine 6-phosphate + AMP + H(+). It functions in the pathway carbohydrate degradation; glycolysis. In terms of biological role, catalyzes the ADP-dependent phosphorylation of D-glucose to D-glucose 6-phosphate and glucosamine to glucosamine 6-phosphate. This Pyrococcus abyssi (strain GE5 / Orsay) protein is ADP-dependent glucose/glucosamine kinase.